An 84-amino-acid polypeptide reads, in one-letter code: Magnetosome protein MamR (84 aa).

This sequence belongs to the magnetosome MamR family.

Its subcellular location is the magnetosome. In terms of biological role, may play a role in controlling magnetite number and size but not in control of magnetite morphology. The polypeptide is Magnetosome protein MamR (Paramagnetospirillum magneticum (strain ATCC 700264 / AMB-1) (Magnetospirillum magneticum)).